The chain runs to 404 residues: tRNA N6-adenosine threonylcarbamoyltransferase, mitochondrial (404 aa).

Residues 1–27 (MFQSCLPGALRSWSRGVFSTSTRPRLV) constitute a mitochondrion transit peptide. Residues histidine 135 and histidine 139 each contribute to the a divalent metal cation site. Substrate is bound by residues 157 to 161 (LVSGG), aspartate 190, glycine 210, glutamate 214, 317 to 318 (SN), and threonine 345. Aspartate 346 contacts a divalent metal cation.

Belongs to the KAE1 / TsaD family. In terms of assembly, monomer. A divalent metal cation is required as a cofactor.

It is found in the mitochondrion. It carries out the reaction L-threonylcarbamoyladenylate + adenosine(37) in tRNA = N(6)-L-threonylcarbamoyladenosine(37) in tRNA + AMP + H(+). Its function is as follows. Required for the formation of a threonylcarbamoyl group on adenosine at position 37 (t(6)A37) in mitochondrial tRNAs that read codons beginning with adenine. Probably involved in the transfer of the threonylcarbamoyl moiety of threonylcarbamoyl-AMP (TC-AMP) to the N6 group of A37. Involved in mitochondrial genome maintenance. The sequence is that of tRNA N6-adenosine threonylcarbamoyltransferase, mitochondrial from Danio rerio (Zebrafish).